We begin with the raw amino-acid sequence, 653 residues long: DNA mismatch repair protein MutL (653 aa).

The segment at 375–425 (QNTPDYPRKAPRDNDRDESDNPQVRERAVSNPWVASPKTASTGKERYGSAS) is disordered. Residues 380–389 (YPRKAPRDND) are compositionally biased toward basic and acidic residues.

Belongs to the DNA mismatch repair MutL/HexB family.

Functionally, this protein is involved in the repair of mismatches in DNA. It is required for dam-dependent methyl-directed DNA mismatch repair. May act as a 'molecular matchmaker', a protein that promotes the formation of a stable complex between two or more DNA-binding proteins in an ATP-dependent manner without itself being part of a final effector complex. The chain is DNA mismatch repair protein MutL from Vibrio cholerae serotype O1 (strain ATCC 39541 / Classical Ogawa 395 / O395).